Consider the following 360-residue polypeptide: Protein phosphatase methylesterase 1 (360 aa).

Residues 26 to 50 (DEDDIPEPAVMPPTGNSSSTANTED) form a disordered region. Catalysis depends on residues S167, D192, and H316.

The protein belongs to the AB hydrolase superfamily.

The enzyme catalyses [phosphatase 2A protein]-C-terminal L-leucine methyl ester + H2O = [phosphatase 2A protein]-C-terminal L-leucine + methanol + H(+). In terms of biological role, demethylates proteins that have been reversibly carboxymethylated. Demethylates the phosphatase PP2A catalytic subunit. Involved in the regulation of filamentous growth. The protein is Protein phosphatase methylesterase 1 (PPE1) of Candida albicans (strain SC5314 / ATCC MYA-2876) (Yeast).